A 259-amino-acid chain; its full sequence is Dihydroorotate dehydrogenase B (NAD(+)), electron transfer subunit (259 aa).

The FAD-binding FR-type domain maps to 2-102 (MQKQNMIVVN…LGPLGHGFPV (101 aa)). FAD contacts are provided by residues 53-56 (RPIS), 70-72 (LYR), and 77-78 (GT). The [2Fe-2S] cluster site is built by Cys-221, Cys-226, Cys-229, and Cys-246.

This sequence belongs to the PyrK family. Heterotetramer of 2 PyrK and 2 PyrD type B subunits. [2Fe-2S] cluster serves as cofactor. It depends on FAD as a cofactor.

It functions in the pathway pyrimidine metabolism; UMP biosynthesis via de novo pathway; orotate from (S)-dihydroorotate (NAD(+) route): step 1/1. Functionally, responsible for channeling the electrons from the oxidation of dihydroorotate from the FMN redox center in the PyrD type B subunit to the ultimate electron acceptor NAD(+). This is Dihydroorotate dehydrogenase B (NAD(+)), electron transfer subunit from Bacillus cereus (strain ATCC 14579 / DSM 31 / CCUG 7414 / JCM 2152 / NBRC 15305 / NCIMB 9373 / NCTC 2599 / NRRL B-3711).